Reading from the N-terminus, the 453-residue chain is Histidine--tRNA ligase (453 aa).

This sequence belongs to the class-II aminoacyl-tRNA synthetase family. As to quaternary structure, homodimer.

Its subcellular location is the cytoplasm. It catalyses the reaction tRNA(His) + L-histidine + ATP = L-histidyl-tRNA(His) + AMP + diphosphate + H(+). This Cytophaga hutchinsonii (strain ATCC 33406 / DSM 1761 / CIP 103989 / NBRC 15051 / NCIMB 9469 / D465) protein is Histidine--tRNA ligase.